The following is a 61-amino-acid chain: Small ribosomal subunit protein uS14 (61 aa).

Zn(2+) contacts are provided by Cys-24, Cys-27, Cys-40, and Cys-43.

Belongs to the universal ribosomal protein uS14 family. Zinc-binding uS14 subfamily. In terms of assembly, part of the 30S ribosomal subunit. Contacts proteins S3 and S10. The cofactor is Zn(2+).

Binds 16S rRNA, required for the assembly of 30S particles and may also be responsible for determining the conformation of the 16S rRNA at the A site. This Rhodopirellula baltica (strain DSM 10527 / NCIMB 13988 / SH1) protein is Small ribosomal subunit protein uS14.